Reading from the N-terminus, the 33-residue chain is DELTA-pseudomyrmecitoxin-Pp1a subunit B (33 aa).

In terms of assembly, heterodimer composed of subunit A and subunit B (DELTA-PSDTX-Pp1a); disulfide-linked. Expressed by the venom gland.

Its subcellular location is the secreted. Its function is as follows. This heterodimer has insecticidal and cytotoxic properties. Induces immediate paralysis when injected into blowflies (Lucilia cuprina), and then death within 24 hours. Also inhibits the growth of Aedes albopictus mosquito C6/36 cells. This is DELTA-pseudomyrmecitoxin-Pp1a subunit B from Pseudomyrmex penetrator (Ant).